A 143-amino-acid polypeptide reads, in one-letter code: Nucleoside diphosphate kinase (143 aa).

K11, F59, R87, T93, R104, and N114 together coordinate ATP. Catalysis depends on H117, which acts as the Pros-phosphohistidine intermediate.

Belongs to the NDK family. As to quaternary structure, homotetramer. Mg(2+) serves as cofactor.

Its subcellular location is the cytoplasm. It catalyses the reaction a 2'-deoxyribonucleoside 5'-diphosphate + ATP = a 2'-deoxyribonucleoside 5'-triphosphate + ADP. The enzyme catalyses a ribonucleoside 5'-diphosphate + ATP = a ribonucleoside 5'-triphosphate + ADP. Functionally, major role in the synthesis of nucleoside triphosphates other than ATP. The ATP gamma phosphate is transferred to the NDP beta phosphate via a ping-pong mechanism, using a phosphorylated active-site intermediate. The polypeptide is Nucleoside diphosphate kinase (Psychrobacter cryohalolentis (strain ATCC BAA-1226 / DSM 17306 / VKM B-2378 / K5)).